The chain runs to 73 residues: Large ribosomal subunit protein bL28 (73 aa).

The protein belongs to the bacterial ribosomal protein bL28 family.

This chain is Large ribosomal subunit protein bL28, found in Buchnera aphidicola subsp. Cinara cedri (strain Cc).